We begin with the raw amino-acid sequence, 390 residues long: Lipoyl synthase, mitochondrial (390 aa).

Residues 1–19 (MPTLLRILRPPRSPFTRCL) constitute a mitochondrion transit peptide. Residues 23–48 (ATPSSSGSSSRSKFTESLETGPGLDD) form a disordered region. Cys98, Cys103, Cys109, Cys136, Cys140, Cys143, and Ser350 together coordinate [4Fe-4S] cluster. Residues 119-339 (AEGRSAATAT…KEVAENLGFL (221 aa)) enclose the Radical SAM core domain.

This sequence belongs to the radical SAM superfamily. Lipoyl synthase family. It depends on [4Fe-4S] cluster as a cofactor.

The protein localises to the mitochondrion. The enzyme catalyses [[Fe-S] cluster scaffold protein carrying a second [4Fe-4S](2+) cluster] + N(6)-octanoyl-L-lysyl-[protein] + 2 oxidized [2Fe-2S]-[ferredoxin] + 2 S-adenosyl-L-methionine + 4 H(+) = [[Fe-S] cluster scaffold protein] + N(6)-[(R)-dihydrolipoyl]-L-lysyl-[protein] + 4 Fe(3+) + 2 hydrogen sulfide + 2 5'-deoxyadenosine + 2 L-methionine + 2 reduced [2Fe-2S]-[ferredoxin]. Its pathway is protein modification; protein lipoylation via endogenous pathway; protein N(6)-(lipoyl)lysine from octanoyl-[acyl-carrier-protein]: step 2/2. Its function is as follows. Catalyzes the radical-mediated insertion of two sulfur atoms into the C-6 and C-8 positions of the octanoyl moiety bound to the lipoyl domains of lipoate-dependent enzymes, thereby converting the octanoylated domains into lipoylated derivatives. The chain is Lipoyl synthase, mitochondrial from Laccaria bicolor (strain S238N-H82 / ATCC MYA-4686) (Bicoloured deceiver).